Reading from the N-terminus, the 545-residue chain is Probable protein kinase UbiB (545 aa).

In terms of domain architecture, Protein kinase spans 124-502; that stretch reads DFDETPLASA…RRSQGLARFY (379 aa). ATP contacts are provided by residues 130 to 138 and lysine 153; that span reads LASASIAQV. The active-site Proton acceptor is the aspartate 288. Transmembrane regions (helical) follow at residues 498–517 and 521–540; these read LARF…AILF and VETI…LLGW.

The protein belongs to the ABC1 family. UbiB subfamily.

It is found in the cell inner membrane. It functions in the pathway cofactor biosynthesis; ubiquinone biosynthesis [regulation]. In terms of biological role, is probably a protein kinase regulator of UbiI activity which is involved in aerobic coenzyme Q (ubiquinone) biosynthesis. In Photobacterium profundum (strain SS9), this protein is Probable protein kinase UbiB.